The primary structure comprises 247 residues: Probable transcriptional regulatory protein SynWH7803_1972 (247 aa).

Belongs to the TACO1 family.

It localises to the cytoplasm. The polypeptide is Probable transcriptional regulatory protein SynWH7803_1972 (Synechococcus sp. (strain WH7803)).